The sequence spans 178 residues: M-phase-specific PLK1-interacting protein (178 aa).

The segment covering 1–15 has biased composition (pro residues); it reads MHRPNFRPPTPPYPS. A disordered region spans residues 1–134; that stretch reads MHRPNFRPPT…RGREKRMSNE (134 aa). Residues 17–34 show a composition bias toward gly residues; it reads GIGGWGGGNNFRGALGGG. Position 36 is an asymmetric dimethylarginine (Arg36). A phosphoserine mark is found at Ser39 and Ser46. Residue Thr50 is modified to Phosphothreonine. An Omega-N-methylarginine modification is found at Arg56. Residues Arg58, Arg67, and Arg76 each carry the asymmetric dimethylarginine modification. Positions 78–96 are enriched in low complexity; the sequence is GSPSPGGYPGSYSRSPAGS. A phosphoserine mark is found at Ser79, Ser81, Ser92, Ser103, and Ser114. Polar residues predominate over residues 97–121; sequence QHQFGYSPGQQQTYPQGSPRTSTPF. At Arg116 the chain carries Omega-N-methylarginine. Phosphothreonine is present on Thr119. Phosphoserine is present on residues Ser123 and Ser132.

As to quaternary structure, interacts with PLK1; phosphorylation-dependent. Phosphorylated during mitosis in the cell cycle probably by CDK1.

It is found in the nucleus. Its subcellular location is the cytoplasm. The protein localises to the cytoskeleton. It localises to the microtubule organizing center. The protein resides in the centrosome. Its function is as follows. May play a role in maintenance of cell cycle integrity by regulating mitosis or cytokinesis. This chain is M-phase-specific PLK1-interacting protein (Mplkip), found in Mus musculus (Mouse).